The following is a 117-amino-acid chain: Transcription elongation factor A protein-like 8 (117 aa).

Positions 1–81 are disordered; it reads MQKSCDENEG…PEEVIRGVDE (81 aa). Basic and acidic residues predominate over residues 41–81; it reads NVREETDGSLRGEPAEPSPEPKEDTPARHLNPEEVIRGVDE. The stretch at 73–100 forms a coiled coil; the sequence is EEVIRGVDELERLREEIRRVRNKFVLMH.

The protein belongs to the TFS-II family. TFA subfamily. Highly expressed in kidney. Moderately expressed in heart and lung. Low expression in brain and liver. Expression is up-regulated in nephrectomized kidney.

It is found in the nucleus. May be involved in transcriptional regulation. This chain is Transcription elongation factor A protein-like 8 (Tceal8), found in Rattus norvegicus (Rat).